Here is a 640-residue protein sequence, read N- to C-terminus: Probable serine/threonine-protein kinase samkA (640 aa).

One can recognise an SAM domain in the interval 21–84; the sequence is WNNEKIIKWL…SEFEILKNNY (64 aa). Residues 73–100 are a coiled coil; it reads FKSEFEILKNNYDNNNNNNNNNNNNNNN. The disordered stretch occupies residues 84-165; the sequence is YDNNNNNNNN…INFNSNSNIT (82 aa). A Protein kinase domain is found at 191–437; it reads YEYVESISLG…SKDLQKLSWF (247 aa). ATP is bound by residues 197-205 and K221; that span reads ISLGVFSVV. D312 functions as the Proton acceptor in the catalytic mechanism. Residues 448 to 482 form a disordered region; sequence QELTKSTTNTTTTTTTTTTPPPPPSPSSSSPSMNE. Low complexity predominate over residues 453-465; that stretch reads STTNTTTTTTTTT.

This sequence belongs to the protein kinase superfamily. Ser/Thr protein kinase family.

The catalysed reaction is L-seryl-[protein] + ATP = O-phospho-L-seryl-[protein] + ADP + H(+). It catalyses the reaction L-threonyl-[protein] + ATP = O-phospho-L-threonyl-[protein] + ADP + H(+). The sequence is that of Probable serine/threonine-protein kinase samkA (samkA) from Dictyostelium discoideum (Social amoeba).